Here is a 299-residue protein sequence, read N- to C-terminus: Pyridoxal 5'-phosphate synthase subunit PdxS (299 aa).

Residue Asp-24 participates in D-ribose 5-phosphate binding. Catalysis depends on Lys-81, which acts as the Schiff-base intermediate with D-ribose 5-phosphate. Gly-153 is a D-ribose 5-phosphate binding site. D-glyceraldehyde 3-phosphate is bound at residue Arg-165. Residues Gly-219 and 240–241 (GS) contribute to the D-ribose 5-phosphate site.

It belongs to the PdxS/SNZ family. As to quaternary structure, in the presence of PdxT, forms a dodecamer of heterodimers.

It carries out the reaction aldehydo-D-ribose 5-phosphate + D-glyceraldehyde 3-phosphate + L-glutamine = pyridoxal 5'-phosphate + L-glutamate + phosphate + 3 H2O + H(+). It functions in the pathway cofactor biosynthesis; pyridoxal 5'-phosphate biosynthesis. Catalyzes the formation of pyridoxal 5'-phosphate from ribose 5-phosphate (RBP), glyceraldehyde 3-phosphate (G3P) and ammonia. The ammonia is provided by the PdxT subunit. Can also use ribulose 5-phosphate and dihydroxyacetone phosphate as substrates, resulting from enzyme-catalyzed isomerization of RBP and G3P, respectively. The protein is Pyridoxal 5'-phosphate synthase subunit PdxS of Methanococcus maripaludis (strain C5 / ATCC BAA-1333).